Consider the following 739-residue polypeptide: Exocyst complex component 3-like protein (739 aa).

A mediates interaction with EXOC2, EXOC4 and EXOC5 region spans residues 1–370 (MDSAARDKTQ…DVSDLEPLLT (370 aa)).

Belongs to the SEC6 family. In terms of assembly, interacts with EXOC2, EXOC4 and EXOC5; may be part of the exocyst.

It is found in the cytoplasmic vesicle. It localises to the secretory vesicle. In terms of biological role, as part of the exocyst, may play a role in regulated exocytosis of insulin granules. The protein is Exocyst complex component 3-like protein (EXOC3L1) of Bos taurus (Bovine).